Reading from the N-terminus, the 199-residue chain is Thioredoxin reductase-like selenoprotein T (199 aa).

The signal sequence occupies residues 1 to 24 (MRAAGLGLGIGLLLLAALAGPGGS). The cysteinyl-selenocysteine (Cys-Sec) cross-link spans 50–53 (CVSU). Residue Sec-53 is a non-standard amino acid, selenocysteine. Residues 95 to 115 (VFKLVLIGLIIVGKDPFAFFG) form a helical membrane-spanning segment.

This sequence belongs to the SelWTH family. Selenoprotein T subfamily. In terms of processing, may contain a selenide-sulfide bond between Cys-50 and Sec-53. This bond is speculated to serve as redox-active pair.

The protein resides in the endoplasmic reticulum membrane. It carries out the reaction [thioredoxin]-dithiol + NADP(+) = [thioredoxin]-disulfide + NADPH + H(+). Selenoprotein with thioredoxin reductase-like oxidoreductase activity. This chain is Thioredoxin reductase-like selenoprotein T, found in Gallus gallus (Chicken).